We begin with the raw amino-acid sequence, 106 residues long: Urease subunit beta (106 aa).

The protein belongs to the urease beta subunit family. Heterotrimer of UreA (gamma), UreB (beta) and UreC (alpha) subunits. Three heterotrimers associate to form the active enzyme.

The protein resides in the cytoplasm. It carries out the reaction urea + 2 H2O + H(+) = hydrogencarbonate + 2 NH4(+). It participates in nitrogen metabolism; urea degradation; CO(2) and NH(3) from urea (urease route): step 1/1. In Prochlorococcus marinus (strain NATL1A), this protein is Urease subunit beta.